Reading from the N-terminus, the 65-residue chain is Large ribosomal subunit protein bL35 (65 aa).

Residues 1–15 are compositionally biased toward basic residues; the sequence is MPKMKTKKSASKRFT. A disordered region spans residues 1 to 27; that stretch reads MPKMKTKKSASKRFTARPNGSFKRGQA.

This sequence belongs to the bacterial ribosomal protein bL35 family.

This Cupriavidus pinatubonensis (strain JMP 134 / LMG 1197) (Cupriavidus necator (strain JMP 134)) protein is Large ribosomal subunit protein bL35.